We begin with the raw amino-acid sequence, 493 residues long: Cytochrome P450 2E1 (493 aa).

298–303 contacts substrate; it reads FAGTET. Cys-437 contributes to the heme binding site.

It belongs to the cytochrome P450 family. Interacts with chaperones HSP70 and HSP90; this interaction is required for initial targeting to mitochondria. Heme is required as a cofactor.

It localises to the endoplasmic reticulum membrane. It is found in the microsome membrane. The protein resides in the mitochondrion inner membrane. It carries out the reaction an organic molecule + reduced [NADPH--hemoprotein reductase] + O2 = an alcohol + oxidized [NADPH--hemoprotein reductase] + H2O + H(+). It catalyses the reaction (5Z,8Z,11Z)-eicosatrienoate + reduced [NADPH--hemoprotein reductase] + O2 = 19-hydroxy-(5Z,8Z,11Z)-eicosatrienoate + oxidized [NADPH--hemoprotein reductase] + H2O + H(+). The enzyme catalyses (5Z,8Z,11Z,14Z,17Z)-eicosapentaenoate + reduced [NADPH--hemoprotein reductase] + O2 = 19-hydroxy-(5Z,8Z,11Z,14Z,17Z)-eicosapentaenoate + oxidized [NADPH--hemoprotein reductase] + H2O + H(+). The catalysed reaction is (4Z,7Z,10Z,13Z,16Z,19Z)-docosahexaenoate + reduced [NADPH--hemoprotein reductase] + O2 = 21-hydroxy-(4Z,7Z,10Z,13Z,16Z,19Z)-docosahexaenoate + oxidized [NADPH--hemoprotein reductase] + H2O + H(+). It carries out the reaction dodecanoate + reduced [NADPH--hemoprotein reductase] + O2 = 11-hydroxydodecanoate + oxidized [NADPH--hemoprotein reductase] + H2O + H(+). It catalyses the reaction tetradecanoate + reduced [NADPH--hemoprotein reductase] + O2 = 13-hydroxytetradecanoate + oxidized [NADPH--hemoprotein reductase] + H2O + H(+). The enzyme catalyses 4-nitrophenol + NADPH + O2 + H(+) = 4-nitrocatechol + NADP(+) + H2O. It functions in the pathway lipid metabolism; fatty acid metabolism. With respect to regulation, the omega-1 hydroxylase activity is stimulated by cytochrome b5. In terms of biological role, a cytochrome P450 monooxygenase involved in the metabolism of fatty acids. Mechanistically, uses molecular oxygen inserting one oxygen atom into a substrate, and reducing the second into a water molecule, with two electrons provided by NADPH via cytochrome P450 reductase (NADPH--hemoprotein reductase). Catalyzes the hydroxylation of carbon-hydrogen bonds. Hydroxylates fatty acids specifically at the omega-1 position displaying the highest catalytic activity for saturated fatty acids. May be involved in the oxidative metabolism of xenobiotics. This is Cytochrome P450 2E1 (CYP2E1) from Oryctolagus cuniculus (Rabbit).